The following is a 181-amino-acid chain: MAFLIMSSAAAVATGTNAAQASMIAPFTGLKSATSFPVSRKQNLDITSIASNGGRVQCMQVWPPINKKKYETLSYLPDLSEEQLLREVEYLLKNGWVPCLEFETEHGFVYRENNKSPGYYDGRYWTMWKLPMFGCTDATQVLAEVEEAKKAYPQAWIRIIGFDNVRQVQCISFIAYKPEGY.

Residues 1–57 (MAFLIMSSAAAVATGTNAAQASMIAPFTGLKSATSFPVSRKQNLDITSIASNGGRVQ) constitute a chloroplast transit peptide.

Belongs to the RuBisCO small chain family. In terms of assembly, heterohexadecamer of 8 large and 8 small subunits.

The protein localises to the plastid. It localises to the chloroplast. In terms of biological role, ruBisCO catalyzes two reactions: the carboxylation of D-ribulose 1,5-bisphosphate, the primary event in carbon dioxide fixation, as well as the oxidative fragmentation of the pentose substrate. Both reactions occur simultaneously and in competition at the same active site. Although the small subunit is not catalytic it is essential for maximal activity. The sequence is that of Ribulose bisphosphate carboxylase small subunit, chloroplastic 2 from Nicotiana sylvestris (Wood tobacco).